Consider the following 789-residue polypeptide: Probable Xaa-Pro aminopeptidase SNOG_02267 (789 aa).

Residues Asp-240, Asp-251, Glu-375, and Glu-416 each contribute to the Mn(2+) site. Disordered stretches follow at residues Ser-607–Ala-658 and Asn-670–Leu-704. Residues Val-622–Thr-637 are compositionally biased toward polar residues. Basic and acidic residues predominate over residues Ala-638–Gln-650.

Belongs to the peptidase M24B family. The cofactor is Mn(2+).

The enzyme catalyses Release of any N-terminal amino acid, including proline, that is linked to proline, even from a dipeptide or tripeptide.. In terms of biological role, catalyzes the removal of a penultimate prolyl residue from the N-termini of peptides. The chain is Probable Xaa-Pro aminopeptidase SNOG_02267 from Phaeosphaeria nodorum (strain SN15 / ATCC MYA-4574 / FGSC 10173) (Glume blotch fungus).